A 527-amino-acid polypeptide reads, in one-letter code: GMP synthase [glutamine-hydrolyzing] (527 aa).

In terms of domain architecture, Glutamine amidotransferase type-1 spans 19–212 (KIIVLDYGSQ…AFSICGAKGD (194 aa)). Cys-96 acts as the Nucleophile in catalysis. Active-site residues include His-186 and Glu-188. Residues 213–402 (WSMANFVDMQ…LGMPDEVVWR (190 aa)) enclose the GMPS ATP-PPase domain. An ATP-binding site is contributed by 240 to 246 (SGGVDSS).

In terms of assembly, homodimer.

The enzyme catalyses XMP + L-glutamine + ATP + H2O = GMP + L-glutamate + AMP + diphosphate + 2 H(+). It participates in purine metabolism; GMP biosynthesis; GMP from XMP (L-Gln route): step 1/1. Its function is as follows. Catalyzes the synthesis of GMP from XMP. The protein is GMP synthase [glutamine-hydrolyzing] of Streptococcus thermophilus (strain ATCC BAA-250 / LMG 18311).